Consider the following 202-residue polypeptide: dITP/XTP pyrophosphatase (202 aa).

7-12 (TTNEGK) is a binding site for substrate. The Mg(2+) site is built by E37 and D66. Residue D66 is the Proton acceptor of the active site. Substrate is bound by residues S67, 155-158 (FGYD), K178, and 183-184 (HR).

It belongs to the HAM1 NTPase family. Homodimer. It depends on Mg(2+) as a cofactor.

The catalysed reaction is XTP + H2O = XMP + diphosphate + H(+). It carries out the reaction dITP + H2O = dIMP + diphosphate + H(+). The enzyme catalyses ITP + H2O = IMP + diphosphate + H(+). Functionally, pyrophosphatase that catalyzes the hydrolysis of nucleoside triphosphates to their monophosphate derivatives, with a high preference for the non-canonical purine nucleotides XTP (xanthosine triphosphate), dITP (deoxyinosine triphosphate) and ITP. Seems to function as a house-cleaning enzyme that removes non-canonical purine nucleotides from the nucleotide pool, thus preventing their incorporation into DNA/RNA and avoiding chromosomal lesions. In Aquifex aeolicus (strain VF5), this protein is dITP/XTP pyrophosphatase.